We begin with the raw amino-acid sequence, 722 residues long: Dynein axonemal intermediate chain 7 (722 aa).

Over residues 1–15 the composition is skewed to basic residues; sequence MGPKAKKSGSKKKKV. Positions 1 to 20 are disordered; it reads MGPKAKKSGSKKKKVTKAER.

It belongs to the DNAI7 family. As to quaternary structure, part of the multisubunit axonemal dynein complex formed at least of two heavy chains and a number of intermediate and light chains. Associates with tubulin. Interacts with microtubule. Ubiquitinated. Ubiquitination leads to its degradation through the 26S proteasome. Ubiquitin-proteasome-mediated DNAI7 degradation occurs in mitosis.

Its subcellular location is the cell projection. It localises to the cilium. It is found in the cytoplasm. In terms of biological role, via its association with the multisubunit axonemal dynein complex, is potentially involved in the regulation of cilia function. May act as a cell cycle regulator. In Macaca fascicularis (Crab-eating macaque), this protein is Dynein axonemal intermediate chain 7.